We begin with the raw amino-acid sequence, 50 residues long: Photosystem I reaction center subunit IX (50 aa).

The chain crosses the membrane as a helical span at residues Y7–I27.

It belongs to the PsaJ family.

The protein localises to the plastid. It is found in the chloroplast thylakoid membrane. In terms of biological role, may help in the organization of the PsaE and PsaF subunits. This chain is Photosystem I reaction center subunit IX, found in Pinus koraiensis (Korean pine).